The following is a 437-amino-acid chain: Adenylosuccinate synthetase (437 aa).

GTP-binding positions include 12-18 (GDEGKGK) and 40-42 (GHT). Asp-13 (proton acceptor) is an active-site residue. Positions 13 and 40 each coordinate Mg(2+). IMP is bound by residues 13 to 16 (DEGK), 38 to 41 (NAGH), Thr-131, Arg-145, Gln-225, and Thr-240. The Proton donor role is filled by His-41. Positions 281 to 304 (TELLGADGKPDADGERLGTRGHEF) are disordered. A compositionally biased stretch (basic and acidic residues) spans 288–303 (GKPDADGERLGTRGHE). 306 to 312 (TTTGRQR) is a substrate binding site. Arg-310 is a binding site for IMP. GTP contacts are provided by residues Arg-312, 338–340 (KLD), and 420–422 (STS).

Belongs to the adenylosuccinate synthetase family. As to quaternary structure, homodimer. Requires Mg(2+) as cofactor.

The protein resides in the cytoplasm. The enzyme catalyses IMP + L-aspartate + GTP = N(6)-(1,2-dicarboxyethyl)-AMP + GDP + phosphate + 2 H(+). It participates in purine metabolism; AMP biosynthesis via de novo pathway; AMP from IMP: step 1/2. In terms of biological role, plays an important role in the de novo pathway of purine nucleotide biosynthesis. Catalyzes the first committed step in the biosynthesis of AMP from IMP. The sequence is that of Adenylosuccinate synthetase from Ruegeria sp. (strain TM1040) (Silicibacter sp.).